A 314-amino-acid chain; its full sequence is Pantothenate synthetase (314 aa).

Residue 43 to 50 (MGALHEGH) coordinates ATP. The Proton donor role is filled by His-50. Residue Gln-75 coordinates (R)-pantoate. A beta-alanine-binding site is contributed by Gln-75. Residues 112-131 (MYPDGTRTSVHPGPLGDDLE) are disordered. An ATP-binding site is contributed by 161 to 164 (GEKD). Gln-167 serves as a coordination point for (R)-pantoate. ATP-binding positions include Val-190 and 198 to 201 (LSSR).

Belongs to the pantothenate synthetase family. Homodimer.

The protein resides in the cytoplasm. The catalysed reaction is (R)-pantoate + beta-alanine + ATP = (R)-pantothenate + AMP + diphosphate + H(+). The protein operates within cofactor biosynthesis; (R)-pantothenate biosynthesis; (R)-pantothenate from (R)-pantoate and beta-alanine: step 1/1. Its function is as follows. Catalyzes the condensation of pantoate with beta-alanine in an ATP-dependent reaction via a pantoyl-adenylate intermediate. This chain is Pantothenate synthetase, found in Mycolicibacterium smegmatis (strain ATCC 700084 / mc(2)155) (Mycobacterium smegmatis).